A 196-amino-acid chain; its full sequence is Adenylate kinase (196 aa).

Position 9 to 17 (9 to 17 (GIPGVGKST)) interacts with ATP.

This sequence belongs to the archaeal adenylate kinase family.

It localises to the cytoplasm. It carries out the reaction AMP + ATP = 2 ADP. The polypeptide is Adenylate kinase (adkA) (Pyrococcus abyssi (strain GE5 / Orsay)).